The chain runs to 353 residues: Rhodopsin (353 aa).

Over 1–36 the chain is Extracellular; it reads MNGTEGPYFYIPMLNTTGIVRSPYEYPQYYLVNPAA. Residues N2 and N15 are each glycosylated (N-linked (GlcNAc...) asparagine). Residues 37 to 61 form a helical membrane-spanning segment; that stretch reads YAALCAYMFLLILLGFPINFLTLYV. The Cytoplasmic portion of the chain corresponds to 62 to 73; it reads TIEHKKLRTPLN. The helical transmembrane segment at 74-96 threads the bilayer; that stretch reads YILLNLAVANLFMVFGGFTTTMY. Over 97 to 110 the chain is Extracellular; that stretch reads TSMHGYFVLGRLGC. C110 and C187 form a disulfide bridge. The helical transmembrane segment at 111–133 threads the bilayer; sequence NLEGFFATLGGEIGLWSLVVLAV. The 'Ionic lock' involved in activated form stabilization motif lies at 134 to 136; that stretch reads ERW. Residues 134-152 are Cytoplasmic-facing; the sequence is ERWMVVCKPISNFRFTENH. A helical transmembrane segment spans residues 153–173; it reads AIMGLGFTWFAASACAVPPLV. Topologically, residues 174-202 are extracellular; it reads GWSRYIPEGMQCSCGVDYYTRAEGFNNES. N-linked (GlcNAc...) asparagine glycosylation occurs at N200. A helical transmembrane segment spans residues 203-224; sequence FVVYMFVCHFLIPLIVVFFCYG. The Cytoplasmic portion of the chain corresponds to 225-252; sequence RLLCAVKEAAAAQQESETTQRAEREVTR. The chain crosses the membrane as a helical span at residues 253–274; that stretch reads MVVIMVIAFLICWCPYAGVAWY. The Extracellular portion of the chain corresponds to 275–286; that stretch reads IFSNQGSEFGPL. A helical transmembrane segment spans residues 287–308; sequence FMTIPAFFAKSSSIYNPLIYIF. N6-(retinylidene)lysine is present on K296. Topologically, residues 309–353 are cytoplasmic; that stretch reads MNKQFRHCMITTLCCGKNPFEEEEGSTTTSKTEASSASSSSVSPA. S-palmitoyl cysteine attachment occurs at residues C322 and C323. The disordered stretch occupies residues 329 to 353; that stretch reads EEEEGSTTTSKTEASSASSSSVSPA. Residues 334–353 are compositionally biased toward low complexity; that stretch reads STTTSKTEASSASSSSVSPA.

This sequence belongs to the G-protein coupled receptor 1 family. Opsin subfamily. Post-translationally, phosphorylated on some or all of the serine and threonine residues present in the C-terminal region. Contains one covalently linked retinal chromophore.

Its subcellular location is the membrane. It is found in the cell projection. It localises to the cilium. The protein resides in the photoreceptor outer segment. Its function is as follows. Photoreceptor required for image-forming vision at low light intensity. While most salt water fish species use retinal as chromophore, most freshwater fish use 3-dehydroretinal, or a mixture of retinal and 3-dehydroretinal. Light-induced isomerization of 11-cis to all-trans retinal triggers a conformational change that activates signaling via G-proteins. Subsequent receptor phosphorylation mediates displacement of the bound G-protein alpha subunit by arrestin and terminates signaling. The sequence is that of Rhodopsin (rho) from Solea solea (Common sole).